The primary structure comprises 244 residues: 1-(5-phosphoribosyl)-5-[(5-phosphoribosylamino)methylideneamino] imidazole-4-carboxamide isomerase (244 aa).

The Proton acceptor role is filled by aspartate 15. Aspartate 136 serves as the catalytic Proton donor.

Belongs to the HisA/HisF family.

It is found in the cytoplasm. The enzyme catalyses 1-(5-phospho-beta-D-ribosyl)-5-[(5-phospho-beta-D-ribosylamino)methylideneamino]imidazole-4-carboxamide = 5-[(5-phospho-1-deoxy-D-ribulos-1-ylimino)methylamino]-1-(5-phospho-beta-D-ribosyl)imidazole-4-carboxamide. Its pathway is amino-acid biosynthesis; L-histidine biosynthesis; L-histidine from 5-phospho-alpha-D-ribose 1-diphosphate: step 4/9. The sequence is that of 1-(5-phosphoribosyl)-5-[(5-phosphoribosylamino)methylideneamino] imidazole-4-carboxamide isomerase from Dehalococcoides mccartyi (strain CBDB1).